Reading from the N-terminus, the 37-residue chain is Albumin-2 (37 aa).

Residues I6 to K37 form a Hemopexin repeat.

Dimer. As to expression, expressed in seeds (at protein level).

The protein resides in the cytoplasm. It is found in the cytosol. Functionally, binds hemin and thiamine. This Lens culinaris (Lentil) protein is Albumin-2.